Here is a 796-residue protein sequence, read N- to C-terminus: Exocyst complex component 3 (796 aa).

Residues 87-174 (PQLKEKLREL…GTNTEKEQML (88 aa)) adopt a coiled-coil conformation.

It belongs to the SEC6 family. In terms of assembly, the exocyst complex is composed of sec-3/exoc1, sec-5/exoc2, sec-6/exoc3, sec-8/exoc4, sec-10/exoc5, sec-15/exoc6, exo-70/exoc7 and exo-84/exoc8.

In terms of biological role, component of the exocyst complex involved in the docking of exocytic vesicles with fusion sites on the plasma membrane. The protein is Exocyst complex component 3 (sec-6) of Caenorhabditis elegans.